Consider the following 485-residue polypeptide: Isocitrate dehydrogenase [NADP], chloroplastic/mitochondrial (485 aa).

Residues 1-65 constitute a chloroplast and mitochondrion transit peptide; that stretch reads MLNKLTHGVF…VQFHRASAVR (65 aa). Residues 147–149 and Arg154 contribute to the NADP(+) site; that span reads TIT. Position 149 (Thr149) interacts with substrate. Residues 166–172, Arg181, and Arg204 each bind substrate; that span reads SPNGTIR. Asp323 is a binding site for Mn(2+). Lys331 is a binding site for NADP(+). Asp346 contributes to the Mn(2+) binding site. NADP(+)-binding positions include 381-386 and Asn399; that span reads GTVTRH.

It belongs to the isocitrate and isopropylmalate dehydrogenases family. Mg(2+) is required as a cofactor. Requires Mn(2+) as cofactor.

It localises to the plastid. The protein localises to the chloroplast. Its subcellular location is the mitochondrion. The catalysed reaction is D-threo-isocitrate + NADP(+) = 2-oxoglutarate + CO2 + NADPH. In terms of biological role, may be involved in response to oxidative stresses. This chain is Isocitrate dehydrogenase [NADP], chloroplastic/mitochondrial, found in Arabidopsis thaliana (Mouse-ear cress).